A 37-amino-acid polypeptide reads, in one-letter code: Large ribosomal subunit protein bL36 (37 aa).

Belongs to the bacterial ribosomal protein bL36 family.

This Mycobacterium leprae (strain Br4923) protein is Large ribosomal subunit protein bL36.